The primary structure comprises 429 residues: Probable proton-coupled zinc antiporter SLC30A4 (429 aa).

Over 1–113 (MAGSGAWKRL…LLKQRKVKTR (113 aa)) the chain is Cytoplasmic. A helical membrane pass occupies residues 114–134 (LTIAAVLYLLFMIGELVGGYI). Over 135 to 143 (ANSLAIMTD) the chain is Lumenal. Residues 144-164 (ALHMLTDLSAIILTLLALWLS) form a helical membrane-spanning segment. Zn(2+) contacts are provided by His-146 and Asp-150. At 165 to 178 (SKSPTKRFTFGFHR) the chain is on the cytoplasmic side. A helical membrane pass occupies residues 179–199 (LEVLSAMISVLLVYILMGFLL). Residues 200 to 216 (YEAVQRTIHMKYEINGD) lie on the Lumenal side of the membrane. A helical transmembrane segment spans residues 217–237 (IMLITAAIGVAVNVIMGFLLN). Residues 238–274 (QSGHHHAHSHSLPSNSPTTGPRCGHNQGQDSLAVRAA) are Cytoplasmic-facing. The tract at residues 240 to 264 (GHHHAHSHSLPSNSPTTGPRCGHNQ) is zinc binding. Residues 275–295 (FVHALGDLVQSVGVLIAAYII) traverse the membrane as a helical segment. The Zn(2+) site is built by His-277 and Asp-281. Over 296 to 310 (RFKPEYRIADPICTY) the chain is Lumenal. The helical transmembrane segment at 311-331 (VFSLLVAFTTFRIIWDTVVII) threads the bilayer. At 332 to 429 (LEGVPSHLNV…TCANCQSSSS (98 aa)) the chain is on the cytoplasmic side.

It belongs to the cation diffusion facilitator (CDF) transporter (TC 2.A.4) family. SLC30A subfamily. Homodimerization could regulate efficiency for zinc transport. Interacts with TMEM163.

The protein resides in the endosome membrane. The protein localises to the late endosome membrane. It is found in the lysosome membrane. The enzyme catalyses Zn(2+)(in) + 2 H(+)(out) = Zn(2+)(out) + 2 H(+)(in). In terms of biological role, probable proton-coupled zinc ion antiporter mediating zinc import from cytoplasm potentially into the endocytic compartment. Controls zinc deposition in milk. This chain is Probable proton-coupled zinc antiporter SLC30A4, found in Bos taurus (Bovine).